A 175-amino-acid chain; its full sequence is MSGKELNKIVAAILFASLIAMMVGFVANILYKPTLELQHRGYSVAVQESSENQNTTASEQAPVNIPELMKTANADNGREIAKKCLVCHSLDKDGPNKLGPHLWDVAGRPKASIADYKYSPALSKLGGVWDDDSLFAFLHKPSSYAPGTKMSFAGISKPQDIADVILFLKTYVHDK.

The Cytoplasmic portion of the chain corresponds to 1–8 (MSGKELNK). Residues 9–29 (IVAAILFASLIAMMVGFVANI) form a helical; Signal-anchor membrane-spanning segment. The Periplasmic portion of the chain corresponds to 30-175 (LYKPTLELQH…LFLKTYVHDK (146 aa)). Residues Cys84, Cys87, His88, and Met150 each coordinate heme c.

This sequence belongs to the cytochrome c family. In terms of processing, binds 1 heme c group covalently per subunit.

Its subcellular location is the cell membrane. Its function is as follows. May be involved in electron transfer from bc1 complex to aa3. The chain is Cytochrome c homolog (cycM) from Rickettsia felis (strain ATCC VR-1525 / URRWXCal2) (Rickettsia azadi).